A 486-amino-acid chain; its full sequence is Virulence sensor protein PhoQ (486 aa).

The Cytoplasmic segment spans residues 1–16 (MKKLLRLFFPLSLRVR). A helical transmembrane segment spans residues 17 to 37 (FLLATAAVVLVLSLAYGMVAL). Topologically, residues 38–194 (IGYSVSFDKT…LKSSYMVWSW (157 aa)) are periplasmic. Positions 151 and 152 each coordinate a divalent metal cation. A helical membrane pass occupies residues 195-215 (FIYVLSANLLLVIPLLWVAAW). An HAMP domain is found at 215–266 (WWSLRPIEALAKEVRELEEHNRELLNPATTRELTSLVRNLNRLLKSERERYD). Residues 216–486 (WSLRPIEALA…GRQHSAPKDE (271 aa)) lie on the Cytoplasmic side of the membrane. The Histidine kinase domain maps to 274–480 (DLTHSLKTPL…RMEVIFGRQH (207 aa)). Phosphohistidine; by autocatalysis is present on His277. Asn385 contacts Mg(2+). Residues 385 to 393 (NVLDNACKY), 415 to 420 (DDGPGI), and 434 to 446 (RVDTLRPGQGVGL) each bind ATP. Residue Gln442 coordinates Mg(2+).

Homodimer.

The protein resides in the cell inner membrane. It catalyses the reaction ATP + protein L-histidine = ADP + protein N-phospho-L-histidine.. Member of the two-component regulatory system PhoP/PhoQ involved in virulence and adaptation to low Mg(2+) environments. In low periplasmic Mg(2+), PhoQ functions as a membrane-associated protein kinase that undergoes autophosphorylation and subsequently transfers the phosphate to PhoP, which results in the expression of PhoP-activated genes (PAG) and repression of PhoP-repressed genes (PRG). In high periplasmic Mg(2+), acts as a protein phosphatase that dephosphorylates phospho-PhoP, which results in the repression of PAG and may lead to expression of some PRG. Necessary for resistance to killing by polymorphonuclear leukocytes (PMNs) and cationic antimicrobial peptides (CAMP) they produce. This Shigella flexneri protein is Virulence sensor protein PhoQ (phoQ).